Here is a 320-residue protein sequence, read N- to C-terminus: Mechanosensory protein 3 (320 aa).

2 consecutive LIM zinc-binding domains span residues 29–79 (CNCC…CSQH) and 89–145 (CAGC…CMTH). The segment at residues 216 to 275 (RRGPRTTIKQNQLDVLNEMFSNTPKPSKHARAKKALETGLSMRVIQVWFQNRRSKERRLK) is a DNA-binding region (homeobox).

It localises to the nucleus. In terms of biological role, specifies differentiation of the set of six touch receptor neurons. Binds cooperatively as a heterodimer with unc-86 to sites in the mec-3 gene promoter. The chain is Mechanosensory protein 3 (mec-3) from Caenorhabditis remanei (Caenorhabditis vulgaris).